The following is a 940-amino-acid chain: Isoleucine--tRNA ligase (940 aa).

Positions 58-68 (PYANGDIHIGH) match the 'HIGH' region motif. An L-isoleucyl-5'-AMP-binding site is contributed by Glu564. Residues 605–609 (KMSKS) carry the 'KMSKS' region motif. Position 608 (Lys608) interacts with ATP. Residues Cys903, Cys906, Cys923, and Cys926 each contribute to the Zn(2+) site.

The protein belongs to the class-I aminoacyl-tRNA synthetase family. IleS type 1 subfamily. As to quaternary structure, monomer. Requires Zn(2+) as cofactor.

The protein resides in the cytoplasm. The catalysed reaction is tRNA(Ile) + L-isoleucine + ATP = L-isoleucyl-tRNA(Ile) + AMP + diphosphate. Functionally, catalyzes the attachment of isoleucine to tRNA(Ile). As IleRS can inadvertently accommodate and process structurally similar amino acids such as valine, to avoid such errors it has two additional distinct tRNA(Ile)-dependent editing activities. One activity is designated as 'pretransfer' editing and involves the hydrolysis of activated Val-AMP. The other activity is designated 'posttransfer' editing and involves deacylation of mischarged Val-tRNA(Ile). This is Isoleucine--tRNA ligase from Shewanella piezotolerans (strain WP3 / JCM 13877).